Reading from the N-terminus, the 356-residue chain is Histidinol-phosphate aminotransferase (356 aa).

The residue at position 214 (lysine 214) is an N6-(pyridoxal phosphate)lysine.

Belongs to the class-II pyridoxal-phosphate-dependent aminotransferase family. Histidinol-phosphate aminotransferase subfamily. Homodimer. The cofactor is pyridoxal 5'-phosphate.

It catalyses the reaction L-histidinol phosphate + 2-oxoglutarate = 3-(imidazol-4-yl)-2-oxopropyl phosphate + L-glutamate. The protein operates within amino-acid biosynthesis; L-histidine biosynthesis; L-histidine from 5-phospho-alpha-D-ribose 1-diphosphate: step 7/9. The sequence is that of Histidinol-phosphate aminotransferase from Escherichia coli O9:H4 (strain HS).